Here is a 338-residue protein sequence, read N- to C-terminus: Plasminogen (338 aa).

The Kringle 5 domain occupies 9–88 (CMLGIGKGYQ…LFDYCDVPQC (80 aa)). 9 disulfide bridges follow: cysteine 9/cysteine 88, cysteine 30/cysteine 71, cysteine 59/cysteine 83, cysteine 95/cysteine 213, cysteine 105/cysteine 113, cysteine 135/cysteine 151, cysteine 227/cysteine 294, cysteine 257/cysteine 273, and cysteine 284/cysteine 312. The Peptidase S1 domain maps to 109–336 (IVGGCVAIAH…FINWIERIMQ (228 aa)). The residue at position 125 (serine 125) is a Phosphoserine. Active-site charge relay system residues include histidine 150 and aspartate 193. Serine 288 acts as the Charge relay system in catalysis.

Belongs to the peptidase S1 family. Plasminogen subfamily. Interacts with CSPG4 and AMOT. Interacts (via the Kringle domains) with HRG; the interaction tethers PLG to the cell surface and enhances its activation. Interacts (via Kringle 4 domain) with ADA; the interaction stimulates PLG activation when in complex with DPP4. Angiostatin: Interacts with ATP5F1A; the interaction inhibits most of the angiogenic effects of angiostatin.

Its subcellular location is the secreted. It carries out the reaction Preferential cleavage: Lys-|-Xaa &gt; Arg-|-Xaa, higher selectivity than trypsin. Converts fibrin into soluble products.. Converted into plasmin by plasminogen activators, both plasminogen and its activator being bound to fibrin. Activated with catalytic amounts of streptokinase. Plasmin dissolves the fibrin of blood clots and acts as a proteolytic factor in a variety of other processes including embryonic development, tissue remodeling, tumor invasion, and inflammation. In ovulation, weakens the walls of the Graafian follicle. It activates the urokinase-type plasminogen activator, collagenases and several complement zymogens, such as C1, C4 and C5. Cleavage of fibronectin and laminin leads to cell detachment and apoptosis. Also cleaves fibrin, thrombospondin and von Willebrand factor. Its role in tissue remodeling and tumor invasion may be modulated by CSPG4. Binds to cells. The chain is Plasminogen (PLG) from Equus caballus (Horse).